A 610-amino-acid polypeptide reads, in one-letter code: F-box/LRR-repeat protein 4 (610 aa).

Positions 5–52 (DRINNCLPEELILEIFRRLESKPNRDACSLVCKRWLSLERFSRTTLRI) constitute an F-box domain. LRR repeat units follow at residues 53–79 (GASF…HVDE), 124–149 (SSSL…SLIW), 150–175 (CPNV…DLQG), 178–200 (VGDQ…NLRF), 201–227 (CEGL…GVAA), 228–253 (SAKI…YLDS), 256–277 (IHDK…LKLQ), 278–303 (CVSV…ALYS), 304–329 (FQHF…TLSD), 330–355 (CYFV…EING), 356–381 (CHNI…ALLY), 382–407 (CQRI…HLVD), 408–433 (CSGI…HIRR), 434–459 (CYEI…SLRF), 460–484 (CDKV…NVSG), 485–510 (CNQI…DISV), 511–536 (LQNI…VLSH), 537–562 (CHHI…HMVY), and 563–588 (CPGI…LIEK). Positions 88–125 (LSPSPKRKRGRDSSSPSSSKRKKLTDKTHSGAENVESS) are disordered.

This chain is F-box/LRR-repeat protein 4 (FBL4), found in Arabidopsis thaliana (Mouse-ear cress).